A 422-amino-acid chain; its full sequence is Mitochondrial distribution and morphology protein 12 (422 aa).

Positions 1 to 386 (MSFDINWNQL…WPSWICIDMN (386 aa)) constitute an SMP-LTD domain. 2 disordered regions span residues 74 to 134 (GATN…HDLG) and 387 to 422 (DDGDDDDDDEVEDSNVSDGDGKDNDGKHGDGPTHEV). Composition is skewed to acidic residues over residues 109 to 130 (FDDDDDDDEGVDEDDDDDEYDD) and 387 to 401 (DDGDDDDDDEVEDSN). A compositionally biased stretch (basic and acidic residues) spans 405–422 (GDGKDNDGKHGDGPTHEV).

This sequence belongs to the MDM12 family. Component of the ER-mitochondria encounter structure (ERMES) or MDM complex, composed of MMM1, MDM10, MDM12 and MDM34. An MMM1 homodimer associates with one molecule of MDM12 on each side in a pairwise head-to-tail manner, and the SMP-LTD domains of MMM1 and MDM12 generate a continuous hydrophobic tunnel for phospholipid trafficking.

It localises to the mitochondrion outer membrane. Its subcellular location is the endoplasmic reticulum membrane. In terms of biological role, component of the ERMES/MDM complex, which serves as a molecular tether to connect the endoplasmic reticulum (ER) and mitochondria. Components of this complex are involved in the control of mitochondrial shape and protein biogenesis, and function in nonvesicular lipid trafficking between the ER and mitochondria. MDM12 is required for the interaction of the ER-resident membrane protein MMM1 and the outer mitochondrial membrane-resident beta-barrel protein MDM10. The MDM12-MMM1 subcomplex functions in the major beta-barrel assembly pathway that is responsible for biogenesis of all mitochondrial outer membrane beta-barrel proteins, and acts in a late step after the SAM complex. The MDM10-MDM12-MMM1 subcomplex further acts in the TOM40-specific pathway after the action of the MDM12-MMM1 complex. Essential for establishing and maintaining the structure of mitochondria and maintenance of mtDNA nucleoids. This chain is Mitochondrial distribution and morphology protein 12, found in Candida dubliniensis (strain CD36 / ATCC MYA-646 / CBS 7987 / NCPF 3949 / NRRL Y-17841) (Yeast).